Reading from the N-terminus, the 384-residue chain is MKAIVIGAGIGGLSAAVALKQSGIDCDVYEAVKEIKPVGAAISVWPNGVKCMAHLGMGDIMETFGGPLRRMAYRDFRSGENMTQFSLAPLIERTGSRPCPVSRAELQREMLDYWGRDSVQFGKRVTRCEEDADGVTVWFTDGSSASGDLLIAADGSHSALRPWVLGFTPQRRYAGYVNWNGLVEIDEALAPGDQWTTFVGEGKRVSLMPVSAGRFYFFFDVPLPAGLAEDRDTLRADLSRYFAGWAPPVQKLIAALDPQTTNRIEIHDIEPFSRLVRGRVALLGDAGHSTTPDIGQGGCAAMEDAVVLGAVFRQTRDIAAALREYEAQRCDRVRDLVLKARKRCDITHGKDMQLTEAWYQELREETGERIINGMCDTILSGPLG.

FAD is bound by residues Gly11, 30–31 (EA), Ser43, and Val125. Residues Asn178, Arg204, and 216-218 (YFF) contribute to the substrate site. Residues Asp285 and 295 to 299 (GQGGC) contribute to the FAD site.

It belongs to the FAD-dependent urate hydroxylase family. In terms of assembly, monomer. The cofactor is FAD.

It carries out the reaction urate + NADH + O2 + H(+) = 5-hydroxyisourate + NAD(+) + H2O. Its pathway is purine metabolism; urate degradation. Catalyzes the hydroxylation of urate to 5-hydroxyisourate (HIU). The protein is FAD-dependent urate hydroxylase of Klebsiella pneumoniae subsp. pneumoniae (strain ATCC 700721 / MGH 78578).